A 341-amino-acid chain; its full sequence is tRNA N6-adenosine threonylcarbamoyltransferase (341 aa).

Residues histidine 115 and histidine 119 each coordinate Fe cation. Residues 138–142 (LVSGG), aspartate 171, glycine 184, and asparagine 276 each bind substrate. Residue aspartate 304 participates in Fe cation binding.

It belongs to the KAE1 / TsaD family. Fe(2+) is required as a cofactor.

It localises to the cytoplasm. It catalyses the reaction L-threonylcarbamoyladenylate + adenosine(37) in tRNA = N(6)-L-threonylcarbamoyladenosine(37) in tRNA + AMP + H(+). Required for the formation of a threonylcarbamoyl group on adenosine at position 37 (t(6)A37) in tRNAs that read codons beginning with adenine. Is involved in the transfer of the threonylcarbamoyl moiety of threonylcarbamoyl-AMP (TC-AMP) to the N6 group of A37, together with TsaE and TsaB. TsaD likely plays a direct catalytic role in this reaction. The polypeptide is tRNA N6-adenosine threonylcarbamoyltransferase (Stenotrophomonas maltophilia (strain K279a)).